Reading from the N-terminus, the 639-residue chain is UPF0313 protein CLJ_B0249 (639 aa).

The Radical SAM core domain maps to 295–566 (AIKEVKFSIT…RMQRSLLQFS (272 aa)). Residues cysteine 309, cysteine 313, and cysteine 316 each coordinate [4Fe-4S] cluster. The tract at residues 597-639 (YNKPYKKSHKKNNAKNKNNNYNKNKDVSKKNKKNSLSKHKKRK) is disordered. Composition is skewed to basic residues over residues 600–610 (PYKKSHKKNNA) and 626–639 (KNKK…KKRK).

It belongs to the UPF0313 family. Requires [4Fe-4S] cluster as cofactor.

The chain is UPF0313 protein CLJ_B0249 from Clostridium botulinum (strain 657 / Type Ba4).